A 262-amino-acid polypeptide reads, in one-letter code: Apolipoprotein A-I-2 (262 aa).

An N-terminal signal peptide occupies residues 1–18; it reads MQFLALALTILLAAATQA. The interval 32 to 63 is 3 X approximate tandem repeats; that stretch reads VKVAMMEYMAQVKETAQRSIDHLDDTEYKEYK. Tandem repeats lie at residues 64–85 and 87–107. The 10 X approximate tandem repeats stretch occupies residues 64–262; that stretch reads VQLSQSLDNL…YETISQAMKA (199 aa). The 3; half-length repeat unit spans residues 108-118; it reads KDVEELRSQLE. 5 repeat units span residues 119 to 140, 141 to 162, 163 to 184, 185 to 206, and 207 to 228. The 9; half-length repeat unit spans residues 229–239; the sequence is PLTTDFKGQLG. Repeat unit 10 spans residues 240–262; sequence PAAEQAKEKLMALYETISQAMKA.

It belongs to the apolipoprotein A1/A4/E family.

The protein resides in the secreted. Participates in the reverse transport of cholesterol from tissues to the liver for excretion by promoting cholesterol efflux from tissues and by acting as a cofactor for the lecithin cholesterol acyltransferase (LCAT). The sequence is that of Apolipoprotein A-I-2 from Oncorhynchus mykiss (Rainbow trout).